A 227-amino-acid chain; its full sequence is Putative ankyrin repeat protein L45 (227 aa).

ANK repeat units follow at residues 38-66, 78-107, 108-137, 139-167, 168-197, and 199-227; these read FETN…NINH, CLEE…NIFH, NENC…DVRA, NDYA…DVRS, CDSY…NYRA, and NHHA…GITK.

This Acanthamoeba polyphaga mimivirus (APMV) protein is Putative ankyrin repeat protein L45.